The sequence spans 334 residues: Adenosine deaminase (334 aa).

Zn(2+) is bound by residues H12 and H14. Positions 14, 16, and 170 each coordinate substrate. Position 197 (H197) interacts with Zn(2+). E200 (proton donor) is an active-site residue. D278 provides a ligand contact to Zn(2+). D279 contacts substrate.

This sequence belongs to the metallo-dependent hydrolases superfamily. Adenosine and AMP deaminases family. Adenosine deaminase subfamily. The cofactor is Zn(2+).

It catalyses the reaction adenosine + H2O + H(+) = inosine + NH4(+). The catalysed reaction is 2'-deoxyadenosine + H2O + H(+) = 2'-deoxyinosine + NH4(+). Its function is as follows. Catalyzes the hydrolytic deamination of adenosine and 2-deoxyadenosine. This Vibrio parahaemolyticus serotype O3:K6 (strain RIMD 2210633) protein is Adenosine deaminase.